We begin with the raw amino-acid sequence, 453 residues long: Pup--protein ligase (453 aa).

Glu-9 contacts Mg(2+). Position 53 (Arg-53) interacts with ATP. Tyr-55 provides a ligand contact to Mg(2+). Asp-57 (proton acceptor) is an active-site residue. Glu-63 is a binding site for Mg(2+). The ATP site is built by Thr-66 and Trp-420.

Belongs to the Pup ligase/Pup deamidase family. Pup-conjugating enzyme subfamily.

It carries out the reaction ATP + [prokaryotic ubiquitin-like protein]-L-glutamate + [protein]-L-lysine = ADP + phosphate + N(6)-([prokaryotic ubiquitin-like protein]-gamma-L-glutamyl)-[protein]-L-lysine.. Its pathway is protein degradation; proteasomal Pup-dependent pathway. It functions in the pathway protein modification; protein pupylation. In terms of biological role, catalyzes the covalent attachment of the prokaryotic ubiquitin-like protein modifier Pup to the proteasomal substrate proteins, thereby targeting them for proteasomal degradation. This tagging system is termed pupylation. The ligation reaction involves the side-chain carboxylate of the C-terminal glutamate of Pup and the side-chain amino group of a substrate lysine. The polypeptide is Pup--protein ligase (Streptomyces avermitilis (strain ATCC 31267 / DSM 46492 / JCM 5070 / NBRC 14893 / NCIMB 12804 / NRRL 8165 / MA-4680)).